We begin with the raw amino-acid sequence, 274 residues long: Protein TIFY 11A (274 aa).

2 disordered regions span residues 49 to 95 and 139 to 176; these read SLAL…SQPG and PIND…QEQN. The Tify domain occupies 92–127; sequence SQPGSSQLTIFFGGKVLVYNEFPVDKAKEIMEVAKQ. The span at 139 to 150 shows a compositional bias: polar residues; that stretch reads PINDENNNNKSS. Positions 161 to 185 form a coiled coil; it reads DNNHLTKEQQQQQEQNQIVERIARR. The Jas signature appears at 182-206; sequence IARRASLHRFFAKRKDRAVARAPYQ. Positions 183–190 match the Nuclear localization signal motif; that stretch reads ARRASLHR. Residues 206 to 274 are disordered; it reads QVNQNAGHHR…QSSKDLDLRL (69 aa). Basic and acidic residues predominate over residues 249-274; sequence IKSDGDKDDIMKIEEGQSSKDLDLRL.

Belongs to the TIFY/JAZ family. Homo- and heterodimer. Interacts with MYC2, MYC3, MYC4, AFPH2/NINJA, TIFY10A/JAZ1, TIFY10B/JAZ2, TIFY11B/JAZ6, TIFY5A/JAZ8 and TIFY3B/JAZ12. As to quaternary structure, (Microbial infection) Interacts with the pathogenic Pseudomonas syringae HopZ1a protein. (Microbial infection) Acetylated by Pseudomonas syringae HopZ1a. Post-translationally, ubiquitinated. Targeted for degradation by the SCF(COI1) E3 ubiquitin ligase-proteasome pathway during jasmonate signaling.

The protein resides in the nucleus. Repressor of jasmonate responses. The chain is Protein TIFY 11A from Arabidopsis thaliana (Mouse-ear cress).